The primary structure comprises 156 residues: Small ribosomal subunit protein uS7 (156 aa).

The protein belongs to the universal ribosomal protein uS7 family. As to quaternary structure, part of the 30S ribosomal subunit. Contacts proteins S9 and S11.

Its function is as follows. One of the primary rRNA binding proteins, it binds directly to 16S rRNA where it nucleates assembly of the head domain of the 30S subunit. Is located at the subunit interface close to the decoding center, probably blocks exit of the E-site tRNA. The polypeptide is Small ribosomal subunit protein uS7 (Streptococcus suis (strain 98HAH33)).